We begin with the raw amino-acid sequence, 481 residues long: Aspartyl/glutamyl-tRNA(Asn/Gln) amidotransferase subunit B (481 aa).

The protein belongs to the GatB/GatE family. GatB subfamily. As to quaternary structure, heterotrimer of A, B and C subunits.

It carries out the reaction L-glutamyl-tRNA(Gln) + L-glutamine + ATP + H2O = L-glutaminyl-tRNA(Gln) + L-glutamate + ADP + phosphate + H(+). It catalyses the reaction L-aspartyl-tRNA(Asn) + L-glutamine + ATP + H2O = L-asparaginyl-tRNA(Asn) + L-glutamate + ADP + phosphate + 2 H(+). Its function is as follows. Allows the formation of correctly charged Asn-tRNA(Asn) or Gln-tRNA(Gln) through the transamidation of misacylated Asp-tRNA(Asn) or Glu-tRNA(Gln) in organisms which lack either or both of asparaginyl-tRNA or glutaminyl-tRNA synthetases. The reaction takes place in the presence of glutamine and ATP through an activated phospho-Asp-tRNA(Asn) or phospho-Glu-tRNA(Gln). In Pseudomonas fluorescens (strain ATCC BAA-477 / NRRL B-23932 / Pf-5), this protein is Aspartyl/glutamyl-tRNA(Asn/Gln) amidotransferase subunit B.